The sequence spans 161 residues: Regulator of ribonuclease activity A (161 aa).

The protein belongs to the RraA family. As to quaternary structure, homotrimer. Binds to both RNA-binding sites in the C-terminal region of Rne and to RhlB.

The protein resides in the cytoplasm. Its function is as follows. Globally modulates RNA abundance by binding to RNase E (Rne) and regulating its endonucleolytic activity. Can modulate Rne action in a substrate-dependent manner by altering the composition of the degradosome. Modulates RNA-binding and helicase activities of the degradosome. The chain is Regulator of ribonuclease activity A from Alteromonas mediterranea (strain DSM 17117 / CIP 110805 / LMG 28347 / Deep ecotype).